A 347-amino-acid chain; its full sequence is Fe(2+) transport protein 1 (347 aa).

An N-terminal signal peptide occupies residues 1 to 22 (MASNSALLMKTIFLVLIFVSFA). Topologically, residues 23–52 (ISPATSTAPEECGSESANPCVNKAKALPLK) are extracellular. A helical membrane pass occupies residues 53–73 (VIAIFVILIASMIGVGAPLFS). Residues 74–84 (RNVSFLQPDGN) lie on the Cytoplasmic side of the membrane. Residues 85–105 (IFTIIKCFASGIILGTGFMHV) traverse the membrane as a helical segment. The Extracellular segment spans residues 106 to 125 (LPDSFEMLSSICLEENPWHK). A helical transmembrane segment spans residues 126–146 (FPFSGFLAMLSGLITLAIDSM). Topologically, residues 147–192 (ATSLYTSKNAVGIMPHGHGHGHGPANDVTLPIKEDDSSNAQLLRYR) are cytoplasmic. Glycyl lysine isopeptide (Lys-Gly) (interchain with G-Cter in ubiquitin) cross-links involve residues lysine 154 and lysine 179. The helical transmembrane segment at 193–213 (VIAMVLELGIIVHSVVIGLSL) threads the bilayer. Over 214 to 224 (GATSDTCTIKG) the chain is Extracellular. A helical transmembrane segment spans residues 225 to 245 (LIAALCFHQMFEGMGLGGCIL). Residues 246 to 254 (QAEYTNMKK) lie on the Cytoplasmic side of the membrane. A helical membrane pass occupies residues 255-275 (FVMAFFFAVTTPFGIALGIAL). At 276 to 286 (STVYQDNSPKA) the chain is on the extracellular side. Residues 287–307 (LITVGLLNACSAGLLIYMALV) traverse the membrane as a helical segment. Over 308 to 326 (DLLAAEFMGPKLQGSIKMQ) the chain is Cytoplasmic. Residues 327–347 (FKCLIAALLGCGGMSIIAKWA) form a helical membrane-spanning segment.

Belongs to the ZIP transporter (TC 2.A.5) family. As to quaternary structure, interacts with FREE1. In terms of processing, monoubiquitinated on several Lys residues. Monoubiquitination controls trafficking from the plasma membrane and targeting to the vacuole. As to expression, expressed in the external cell layers of the root including the lateral branching zone. Also detected in flowers before pollination.

It is found in the cell membrane. The protein resides in the early endosome. Its subcellular location is the golgi apparatus. The protein localises to the trans-Golgi network. It localises to the vacuole. In terms of biological role, high-affinity iron transporter that plays a key role in the uptake of iron from the rhizosphere across the plasma membrane in the root epidermal layer. Acts as the principal regulator of iron homeostasis in planta. Also mediates the heavy metals uptake under iron-deficiency by its ability to transport cobalt, cadmium, manganese and/or zinc ions. The chain is Fe(2+) transport protein 1 (IRT1) from Arabidopsis thaliana (Mouse-ear cress).